A 418-amino-acid chain; its full sequence is Serine hydroxymethyltransferase (418 aa).

(6S)-5,6,7,8-tetrahydrofolate-binding positions include Leu121 and 125 to 127 (GHL). Lys230 bears the N6-(pyridoxal phosphate)lysine mark. (6S)-5,6,7,8-tetrahydrofolate contacts are provided by residues Glu246 and 355–357 (SPF).

Belongs to the SHMT family. In terms of assembly, homodimer. Pyridoxal 5'-phosphate serves as cofactor.

It localises to the cytoplasm. It catalyses the reaction (6R)-5,10-methylene-5,6,7,8-tetrahydrofolate + glycine + H2O = (6S)-5,6,7,8-tetrahydrofolate + L-serine. It functions in the pathway one-carbon metabolism; tetrahydrofolate interconversion. The protein operates within amino-acid biosynthesis; glycine biosynthesis; glycine from L-serine: step 1/1. Functionally, catalyzes the reversible interconversion of serine and glycine with tetrahydrofolate (THF) serving as the one-carbon carrier. This reaction serves as the major source of one-carbon groups required for the biosynthesis of purines, thymidylate, methionine, and other important biomolecules. Also exhibits THF-independent aldolase activity toward beta-hydroxyamino acids, producing glycine and aldehydes, via a retro-aldol mechanism. In Streptococcus pneumoniae serotype 19F (strain G54), this protein is Serine hydroxymethyltransferase.